Reading from the N-terminus, the 691-residue chain is Elongation factor G (691 aa).

The 276-residue stretch at Lys8–Asp283 folds into the tr-type G domain. Residues Ala17 to Thr24, Asp81 to His85, and Asn135 to Asp138 each bind GTP.

This sequence belongs to the TRAFAC class translation factor GTPase superfamily. Classic translation factor GTPase family. EF-G/EF-2 subfamily.

It is found in the cytoplasm. In terms of biological role, catalyzes the GTP-dependent ribosomal translocation step during translation elongation. During this step, the ribosome changes from the pre-translocational (PRE) to the post-translocational (POST) state as the newly formed A-site-bound peptidyl-tRNA and P-site-bound deacylated tRNA move to the P and E sites, respectively. Catalyzes the coordinated movement of the two tRNA molecules, the mRNA and conformational changes in the ribosome. This chain is Elongation factor G, found in Campylobacter jejuni subsp. doylei (strain ATCC BAA-1458 / RM4099 / 269.97).